The following is an 890-amino-acid chain: Alanine--tRNA ligase (890 aa).

The Zn(2+) site is built by histidine 573, histidine 577, cysteine 675, and histidine 679.

It belongs to the class-II aminoacyl-tRNA synthetase family. Requires Zn(2+) as cofactor.

It localises to the cytoplasm. The enzyme catalyses tRNA(Ala) + L-alanine + ATP = L-alanyl-tRNA(Ala) + AMP + diphosphate. Catalyzes the attachment of alanine to tRNA(Ala) in a two-step reaction: alanine is first activated by ATP to form Ala-AMP and then transferred to the acceptor end of tRNA(Ala). Also edits incorrectly charged Ser-tRNA(Ala) and Gly-tRNA(Ala) via its editing domain. This chain is Alanine--tRNA ligase, found in Streptomyces avermitilis (strain ATCC 31267 / DSM 46492 / JCM 5070 / NBRC 14893 / NCIMB 12804 / NRRL 8165 / MA-4680).